A 317-amino-acid chain; its full sequence is Transaldolase A (317 aa).

The active-site Schiff-base intermediate with substrate is the K132.

Belongs to the transaldolase family. Type 1 subfamily. Homodimer.

Its subcellular location is the cytoplasm. The catalysed reaction is D-sedoheptulose 7-phosphate + D-glyceraldehyde 3-phosphate = D-erythrose 4-phosphate + beta-D-fructose 6-phosphate. It functions in the pathway carbohydrate degradation; pentose phosphate pathway; D-glyceraldehyde 3-phosphate and beta-D-fructose 6-phosphate from D-ribose 5-phosphate and D-xylulose 5-phosphate (non-oxidative stage): step 2/3. In terms of biological role, transaldolase is important for the balance of metabolites in the pentose-phosphate pathway. The protein is Transaldolase A (talA) of Pasteurella multocida (strain Pm70).